A 73-amino-acid chain; its full sequence is MPQTQELDQRIAELEMKIAFQENTLEELNQALIDQQFVLDKMQLQLRYMASKLKDLQSSNIASQAEETPPPHY.

It belongs to the SlyX family.

This Histophilus somni (strain 2336) (Haemophilus somnus) protein is Protein SlyX homolog.